We begin with the raw amino-acid sequence, 292 residues long: 33 kDa chaperonin (292 aa).

2 cysteine pairs are disulfide-bonded: Cys-230-Cys-232 and Cys-263-Cys-266.

This sequence belongs to the HSP33 family. In terms of processing, under oxidizing conditions two disulfide bonds are formed involving the reactive cysteines. Under reducing conditions zinc is bound to the reactive cysteines and the protein is inactive.

Its subcellular location is the cytoplasm. Redox regulated molecular chaperone. Protects both thermally unfolding and oxidatively damaged proteins from irreversible aggregation. Plays an important role in the bacterial defense system toward oxidative stress. The protein is 33 kDa chaperonin of Salmonella typhi.